Reading from the N-terminus, the 934-residue chain is Replication factor C subunit 1 (934 aa).

The interval 1 to 190 (MSNSDIRSFF…RSSKSKGLPR (190 aa)) is disordered. Position 27 is a phosphoserine (Ser27). The span at 29–39 (KPKRSLKKKRI) shows a compositional bias: basic residues. The span at 89–104 (GVSTTPDEYFEQQSTR) shows a compositional bias: polar residues. Over residues 118-128 (TTSKDVVHPVK) the composition is skewed to basic and acidic residues. Low complexity predominate over residues 165-186 (TSKSKSHTTTATTHTSRSSKSK). The region spanning 236–326 (GNSDCLSGIS…PASGGTGAAA (91 aa)) is the BRCT domain. ATP is bound by residues Thr362, Cys374, 416-423 (GPPGIGKT), and Asn519. Positions 876–895 (AEDEMLEEASDSEAANEEDI) are enriched in acidic residues. The tract at residues 876–934 (AEDEMLEEASDSEAANEEDIDLSKDKFISVPKKPKKRTKAKAEASSSSSTSRRSRKKTA) is disordered.

The protein belongs to the activator 1 large subunit family. In terms of assembly, heteropentamer of subunits rfc1, rfc2, rfc3, rfc4 and rfc5 that forms a complex (RFC) with PCNA in the presence of ATP. Interacts with cdc24.

Its subcellular location is the nucleus. The protein localises to the nucleolus. The elongation of primed DNA templates by DNA polymerase delta and epsilon requires the action of the accessory proteins PCNA and activator 1. Subunit 1 is essential for cell cycle progression. It may associate with components of the DNA replication machinery and serve to enhance the efficiency of DNA replication. The chain is Replication factor C subunit 1 (rfc1) from Schizosaccharomyces pombe (strain 972 / ATCC 24843) (Fission yeast).